A 389-amino-acid polypeptide reads, in one-letter code: D(-)-tartrate dehydratase (389 aa).

Substrate-binding positions include asparagine 21, asparagine 55, lysine 102, tyrosine 156, lysine 182, 182–184, 213–215, glutamate 239, glutamate 265, histidine 322, and 341–343; these read KMK, DAN, and ESY. Lysine 184 serves as the catalytic acceptor. Aspartate 213, glutamate 239, and glutamate 265 together coordinate Mg(2+). The active-site Proton donor/acceptor is histidine 322.

The protein belongs to the mandelate racemase/muconate lactonizing enzyme family. In terms of assembly, homooctamer; tetramer of dimers. Mg(2+) is required as a cofactor.

The enzyme catalyses (S,S)-tartrate = oxaloacetate + H2O. Its function is as follows. Catalyzes the dehydration of D-tartrate to oxaloacetate. This chain is D(-)-tartrate dehydratase (tarD), found in Bradyrhizobium diazoefficiens (strain JCM 10833 / BCRC 13528 / IAM 13628 / NBRC 14792 / USDA 110).